The sequence spans 356 residues: MNYRDLTLRERQVLGIIIQSYVVSAMPVGSRTIARNYNLGLSDATIRNVMADLEADGFISQPHTSAGRVPTDKGYRYYVDLIMNVSRIDEEEKRMIDDRFSNRNSELKGTSAEVLGTAARVLGSISRQLAVVLPPRLSNAVFERLDIVQLASSRIMVVIAIQSLFVKTIVMELNAEISRQKIDAVVDVLNERLPGLTLEEIRSTIAQRLSDFKGSEELMNSIVSSADTLFDESSILEQLYVSGTENIVDQPEFKQPEKVRDIITMIEDKFGMARLVDNAVPSALRQVSECEVAISIGTENRTGKAADLTIVSSPYFAGKMIGRVGVMGPKRMNYEHAVRVVNYMAGCLSEALSGNN.

Belongs to the HrcA family.

Its function is as follows. Negative regulator of class I heat shock genes (grpE-dnaK-dnaJ and groELS operons). Prevents heat-shock induction of these operons. This is Heat-inducible transcription repressor HrcA from Chlorobaculum tepidum (strain ATCC 49652 / DSM 12025 / NBRC 103806 / TLS) (Chlorobium tepidum).